We begin with the raw amino-acid sequence, 714 residues long: Polyribonucleotide nucleotidyltransferase (714 aa).

Mg(2+)-binding residues include aspartate 488 and aspartate 494. Positions proline 555–isoleucine 614 constitute a KH domain. The S1 motif domain occupies glycine 624–lysine 692.

Belongs to the polyribonucleotide nucleotidyltransferase family. It depends on Mg(2+) as a cofactor.

Its subcellular location is the cytoplasm. The enzyme catalyses RNA(n+1) + phosphate = RNA(n) + a ribonucleoside 5'-diphosphate. Functionally, involved in mRNA degradation. Catalyzes the phosphorolysis of single-stranded polyribonucleotides processively in the 3'- to 5'-direction. The polypeptide is Polyribonucleotide nucleotidyltransferase (Brucella ovis (strain ATCC 25840 / 63/290 / NCTC 10512)).